We begin with the raw amino-acid sequence, 457 residues long: Protein translocase subunit SecY (457 aa).

10 helical membrane passes run 17–37, 75–95, 120–140, 163–183, 195–215, 230–250, 287–307, 326–346, 386–406, and 412–432; these read IFFTFSLLALCRIGVFIPVPG, IALGVVPYISASIIVQLLVVF, LFTLLLACVQSLLFAKFALRM, VFYLTTVVVMTTGTLLLMWIG, ISLIITLGMLASFPSVLGSIF, IVSLLVLCAVFVFVLMATVLI, VIPVIFASSLLMFPATIGQFL, VVYSIFYVLLIIFFTYFWTAT, LLGAVFLAVVAILPSILGRIL, and VSYFLGGTAMLIVVGVVLDTM.

It belongs to the SecY/SEC61-alpha family. Component of the Sec protein translocase complex. Heterotrimer consisting of SecY, SecE and SecG subunits. The heterotrimers can form oligomers, although 1 heterotrimer is thought to be able to translocate proteins. Interacts with the ribosome. Interacts with SecDF, and other proteins may be involved. Interacts with SecA.

The protein localises to the cell inner membrane. Its function is as follows. The central subunit of the protein translocation channel SecYEG. Consists of two halves formed by TMs 1-5 and 6-10. These two domains form a lateral gate at the front which open onto the bilayer between TMs 2 and 7, and are clamped together by SecE at the back. The channel is closed by both a pore ring composed of hydrophobic SecY resides and a short helix (helix 2A) on the extracellular side of the membrane which forms a plug. The plug probably moves laterally to allow the channel to open. The ring and the pore may move independently. The protein is Protein translocase subunit SecY of Chlamydia muridarum (strain MoPn / Nigg).